A 212-amino-acid polypeptide reads, in one-letter code: Stringent starvation protein A (212 aa).

One can recognise a GST N-terminal domain in the interval 9–87 (SVMTLFSGPT…YLDERFPHPP (79 aa)). In terms of domain architecture, GST C-terminal spans 92 to 209 (YPVARGESRL…LTEAEREMRL (118 aa)).

It belongs to the GST superfamily. HSP26 family.

Its function is as follows. Forms an equimolar complex with the RNA polymerase holoenzyme (RNAP) but not with the core enzyme. In Escherichia coli O157:H7, this protein is Stringent starvation protein A (sspA).